The chain runs to 94 residues: Small ribosomal subunit protein uS19 (94 aa).

Belongs to the universal ribosomal protein uS19 family.

In terms of biological role, protein S19 forms a complex with S13 that binds strongly to the 16S ribosomal RNA. This Desulforamulus reducens (strain ATCC BAA-1160 / DSM 100696 / MI-1) (Desulfotomaculum reducens) protein is Small ribosomal subunit protein uS19.